The primary structure comprises 349 residues: Green-sensitive opsin-1 (349 aa).

The Extracellular portion of the chain corresponds to 1–36 (MNGTEGKNFYVPMSNRTGLVRSPFEYPQYYLAEPWQ). Asn2 and Asn15 each carry an N-linked (GlcNAc...) asparagine glycan. A helical membrane pass occupies residues 37–61 (FKILALYLFFLMSMGLPINGLTLVV). The Cytoplasmic segment spans residues 62 to 73 (TAQHKKLRQPLN). Residues 74–99 (FILVNLAVAGTIMVCFGFTVTFYTAI) form a helical membrane-spanning segment. The Extracellular segment spans residues 100-113 (NGYFVLGPTGCAVE). A disulfide bond links Cys110 and Cys187. The helical transmembrane segment at 114 to 133 (GFMATLGGEVALWSLVVLAI) threads the bilayer. Residues 134-152 (ERYIVVCKPMGSFKFSSSH) lie on the Cytoplasmic side of the membrane. A helical membrane pass occupies residues 153–176 (AFAGIAFTWVMALACAAPPLFGWS). Over 177–202 (RYIPEGMQCSCGPDYYTLNPDYNNES) the chain is Extracellular. A helical transmembrane segment spans residues 203–230 (YVIYMFVCHFILPVAVIFFTYGRLVCTV). Over 231–252 (KAAAAQQQDSASTQKAEREVTK) the chain is Cytoplasmic. The chain crosses the membrane as a helical span at residues 253–276 (MVILMVFGFLIAWTPYATVAAWIF). Residues 277–284 (FNKGADFS) lie on the Extracellular side of the membrane. Residues 285–309 (AKFMAIPAFFSKSSALYNPVIYVLL) form a helical membrane-spanning segment. Lys296 carries the post-translational modification N6-(retinylidene)lysine. At 310–349 (NKQFRNCMLTTIFCGKNPLGDDESSTVSTSKTEVSSVSPA) the chain is on the cytoplasmic side. A disordered region spans residues 329 to 349 (GDDESSTVSTSKTEVSSVSPA). Residues 334–349 (STVSTSKTEVSSVSPA) show a composition bias toward low complexity.

This sequence belongs to the G-protein coupled receptor 1 family. Opsin subfamily. Phosphorylated on some or all of the serine and threonine residues present in the C-terminal region. In terms of tissue distribution, the color pigments are found in the cone photoreceptor cells.

The protein resides in the membrane. Its function is as follows. Visual pigments are the light-absorbing molecules that mediate vision. They consist of an apoprotein, opsin, covalently linked to cis-retinal. This is Green-sensitive opsin-1 from Carassius auratus (Goldfish).